The sequence spans 393 residues: Phosphoglycerate kinase (393 aa).

Residues aspartate 21–asparagine 23, arginine 36, histidine 59–arginine 62, arginine 114, and arginine 147 contribute to the substrate site. Residues lysine 198, glutamate 320, and glycine 346 to threonine 349 each bind ATP.

Belongs to the phosphoglycerate kinase family. In terms of assembly, monomer.

The protein resides in the cytoplasm. The catalysed reaction is (2R)-3-phosphoglycerate + ATP = (2R)-3-phospho-glyceroyl phosphate + ADP. It functions in the pathway carbohydrate degradation; glycolysis; pyruvate from D-glyceraldehyde 3-phosphate: step 2/5. The chain is Phosphoglycerate kinase from Methylobacillus flagellatus (strain ATCC 51484 / DSM 6875 / VKM B-1610 / KT).